The chain runs to 306 residues: Protoheme IX farnesyltransferase (306 aa).

A run of 9 helical transmembrane segments spans residues 28–48 (LGLV…AIML), 53–73 (FLSS…IMAG), 105–125 (ASIL…LFTI), 127–147 (IETG…YSVW), 156–176 (TIIG…AIEP), 182–202 (AWML…ALAI), 227–244 (LSML…FFMQ), 246–266 (LGTV…LLAI), and 283–303 (FVYS…VTLI).

Belongs to the UbiA prenyltransferase family. Protoheme IX farnesyltransferase subfamily. In terms of assembly, interacts with CtaA.

It localises to the cell membrane. It catalyses the reaction heme b + (2E,6E)-farnesyl diphosphate + H2O = Fe(II)-heme o + diphosphate. Its pathway is porphyrin-containing compound metabolism; heme O biosynthesis; heme O from protoheme: step 1/1. Functionally, converts heme B (protoheme IX) to heme O by substitution of the vinyl group on carbon 2 of heme B porphyrin ring with a hydroxyethyl farnesyl side group. The polypeptide is Protoheme IX farnesyltransferase (Macrococcus caseolyticus (strain JCSC5402) (Macrococcoides caseolyticum)).